The sequence spans 404 residues: Serine/threonine transporter SstT (404 aa).

The next 9 membrane-spanning stretches (helical) occupy residues 17–37 (IGIGVVIGLLLGILLPDVTAI), 44–64 (FVGALKAIAPLLVFALVVQAI), 75–95 (MTLIIVLYLLGTFLAALVAVI), 138–158 (ALATANYIGVLAWALIFGLAL), 179–199 (IVVWIINVAPIGIMGLVFSTV), 212–232 (LLILVLVGTMLFVALVVNPLL), 287–307 (IPLGAMINMGGAAITINVLTL), 319–339 (FLTALLLSVVAAISACGASGV), and 354–374 (FGISSDLAMQVVGVGFIVGVI).

This sequence belongs to the dicarboxylate/amino acid:cation symporter (DAACS) (TC 2.A.23) family.

It localises to the cell membrane. It catalyses the reaction L-serine(in) + Na(+)(in) = L-serine(out) + Na(+)(out). The enzyme catalyses L-threonine(in) + Na(+)(in) = L-threonine(out) + Na(+)(out). Its function is as follows. Involved in the import of serine and threonine into the cell, with the concomitant import of sodium (symport system). In Streptococcus equi subsp. zooepidemicus (strain H70), this protein is Serine/threonine transporter SstT.